We begin with the raw amino-acid sequence, 312 residues long: Regulation of nuclear pre-mRNA domain-containing protein 1A (312 aa).

Serine 2 is subject to N-acetylserine. Residues 2–133 (SAFSEAALEK…QLKQALYGDK (132 aa)) enclose the CID domain. Phosphoserine occurs at positions 153, 156, and 285. A coiled-coil region spans residues 244–286 (LADFLRCQKEALAEKEHKLEEYKRKLARVSLVRKELRSRIQSL).

It belongs to the UPF0400 (RTT103) family. In terms of assembly, may form a heterodimer with RPRD1B. Associates with the RNA polymerase II subunit POLR2A (via CTD phosphorylated at 'Ser-2' and 'Ser-7' of the heptad repeats).

Its subcellular location is the nucleus. Interacts with phosphorylated C-terminal heptapeptide repeat domain (CTD) of the largest RNA polymerase II subunit POLR2A, and participates in dephosphorylation of the CTD by RPAP2. May act as a negative regulator of cyclin-D1 (CCND1) and cyclin-E (CCNE1) in the cell cycle. This chain is Regulation of nuclear pre-mRNA domain-containing protein 1A (RPRD1A), found in Pongo abelii (Sumatran orangutan).